A 257-amino-acid polypeptide reads, in one-letter code: ADP-dependent (S)-NAD(P)H-hydrate dehydratase (257 aa).

Residues 1-257 (MGRLQRTLSN…VIERIPDTIR (257 aa)) enclose the YjeF C-terminal domain. An AMP-binding site is contributed by G200. Residue D201 participates in (6S)-NADPHX binding.

It belongs to the NnrD/CARKD family. In terms of assembly, homotetramer. Mg(2+) is required as a cofactor.

The enzyme catalyses (6S)-NADHX + ADP = AMP + phosphate + NADH + H(+). The catalysed reaction is (6S)-NADPHX + ADP = AMP + phosphate + NADPH + H(+). In terms of biological role, catalyzes the dehydration of the S-form of NAD(P)HX at the expense of ADP, which is converted to AMP. Together with NAD(P)HX epimerase, which catalyzes the epimerization of the S- and R-forms, the enzyme allows the repair of both epimers of NAD(P)HX, a damaged form of NAD(P)H that is a result of enzymatic or heat-dependent hydration. The polypeptide is ADP-dependent (S)-NAD(P)H-hydrate dehydratase (Haloterrigena turkmenica (strain ATCC 51198 / DSM 5511 / JCM 9101 / NCIMB 13204 / VKM B-1734 / 4k) (Halococcus turkmenicus)).